A 1088-amino-acid polypeptide reads, in one-letter code: RNA-directed RNA polymerase (1088 aa).

The RdRp catalytic domain maps to leucine 501–isoleucine 687.

It belongs to the reoviridae RNA-directed RNA polymerase family. In terms of assembly, interacts with VP3 (Potential). Interacts with VP2; this interaction activates VP1. Interacts with NSP5; this interaction is probably necessary for the formation of functional virus factories. Interacts with NSP2; this interaction is weak. Mg(2+) is required as a cofactor.

The protein localises to the virion. The enzyme catalyses RNA(n) + a ribonucleoside 5'-triphosphate = RNA(n+1) + diphosphate. In terms of biological role, RNA-directed RNA polymerase that is involved in both transcription and genome replication. Together with VP3 capping enzyme, forms an enzyme complex positioned near the channels situated at each of the five-fold vertices of the core. Following infection, the outermost layer of the virus is lost, leaving a double-layered particle (DLP) made up of the core and VP6 shell. VP1 then catalyzes the transcription of fully conservative plus-strand genomic RNAs that are extruded through the DLP's channels into the cytoplasm where they function as mRNAs for translation of viral proteins. One copy of each of the viral (+)RNAs is also recruited during core assembly, together with newly synthesized polymerase complexes and VP2. The polymerase of these novo-formed particles catalyzes the synthesis of complementary minus-strands leading to dsRNA formation. To do so, the polymerase specifically recognizes and binds 4 bases 5'-UGUG-3' in the conserved 3'-sequence of plus-strand RNA templates. VP2 presumably activates the autoinhibited VP1-RNA complex to coordinate packaging and genome replication. Once dsRNA synthesis is complete, the polymerase switches to the transcriptional mode, thus providing secondary transcription. The sequence is that of RNA-directed RNA polymerase from Chlorocebus pygerythrus (Vervet monkey).